A 372-amino-acid polypeptide reads, in one-letter code: Queuine tRNA-ribosyltransferase (372 aa).

Aspartate 92 acts as the Proton acceptor in catalysis. Residues aspartate 92–tyrosine 96, aspartate 146, glutamine 188, and glycine 215 contribute to the substrate site. Residues glycine 246–glutamate 252 are RNA binding. The Nucleophile role is filled by aspartate 265. Residues threonine 270–arginine 274 form an RNA binding; important for wobble base 34 recognition region. Zn(2+) is bound by residues cysteine 303, cysteine 305, cysteine 308, and histidine 334.

The protein belongs to the queuine tRNA-ribosyltransferase family. In terms of assembly, homodimer. Within each dimer, one monomer is responsible for RNA recognition and catalysis, while the other monomer binds to the replacement base PreQ1. The cofactor is Zn(2+).

The enzyme catalyses 7-aminomethyl-7-carbaguanine + guanosine(34) in tRNA = 7-aminomethyl-7-carbaguanosine(34) in tRNA + guanine. The protein operates within tRNA modification; tRNA-queuosine biosynthesis. Its function is as follows. Catalyzes the base-exchange of a guanine (G) residue with the queuine precursor 7-aminomethyl-7-deazaguanine (PreQ1) at position 34 (anticodon wobble position) in tRNAs with GU(N) anticodons (tRNA-Asp, -Asn, -His and -Tyr). Catalysis occurs through a double-displacement mechanism. The nucleophile active site attacks the C1' of nucleotide 34 to detach the guanine base from the RNA, forming a covalent enzyme-RNA intermediate. The proton acceptor active site deprotonates the incoming PreQ1, allowing a nucleophilic attack on the C1' of the ribose to form the product. After dissociation, two additional enzymatic reactions on the tRNA convert PreQ1 to queuine (Q), resulting in the hypermodified nucleoside queuosine (7-(((4,5-cis-dihydroxy-2-cyclopenten-1-yl)amino)methyl)-7-deazaguanosine). The sequence is that of Queuine tRNA-ribosyltransferase from Prochlorococcus marinus (strain AS9601).